The primary structure comprises 342 residues: Probable dual-specificity RNA methyltransferase RlmN (342 aa).

Glutamate 91 serves as the catalytic Proton acceptor. Residues 97–326 (YKFGNTACVS…CTVRRELGSD (230 aa)) form the Radical SAM core domain. Cysteine 104 and cysteine 331 are joined by a disulfide. [4Fe-4S] cluster contacts are provided by cysteine 111, cysteine 115, and cysteine 118. S-adenosyl-L-methionine is bound by residues 157–158 (GE), serine 189, 212–214 (SLH), and asparagine 288. Residue cysteine 331 is the S-methylcysteine intermediate of the active site.

It belongs to the radical SAM superfamily. RlmN family. Requires [4Fe-4S] cluster as cofactor.

The protein localises to the cytoplasm. It catalyses the reaction adenosine(2503) in 23S rRNA + 2 reduced [2Fe-2S]-[ferredoxin] + 2 S-adenosyl-L-methionine = 2-methyladenosine(2503) in 23S rRNA + 5'-deoxyadenosine + L-methionine + 2 oxidized [2Fe-2S]-[ferredoxin] + S-adenosyl-L-homocysteine. The enzyme catalyses adenosine(37) in tRNA + 2 reduced [2Fe-2S]-[ferredoxin] + 2 S-adenosyl-L-methionine = 2-methyladenosine(37) in tRNA + 5'-deoxyadenosine + L-methionine + 2 oxidized [2Fe-2S]-[ferredoxin] + S-adenosyl-L-homocysteine. Its function is as follows. Specifically methylates position 2 of adenine 2503 in 23S rRNA and position 2 of adenine 37 in tRNAs. The chain is Probable dual-specificity RNA methyltransferase RlmN from Caldanaerobacter subterraneus subsp. tengcongensis (strain DSM 15242 / JCM 11007 / NBRC 100824 / MB4) (Thermoanaerobacter tengcongensis).